The sequence spans 287 residues: 4-diphosphocytidyl-2-C-methyl-D-erythritol kinase (287 aa).

K14 is a catalytic residue. 98 to 108 (PPGAGLGGGSS) contacts ATP. The active site involves D140.

The protein belongs to the GHMP kinase family. IspE subfamily.

It carries out the reaction 4-CDP-2-C-methyl-D-erythritol + ATP = 4-CDP-2-C-methyl-D-erythritol 2-phosphate + ADP + H(+). The protein operates within isoprenoid biosynthesis; isopentenyl diphosphate biosynthesis via DXP pathway; isopentenyl diphosphate from 1-deoxy-D-xylulose 5-phosphate: step 3/6. Catalyzes the phosphorylation of the position 2 hydroxy group of 4-diphosphocytidyl-2C-methyl-D-erythritol. This Methylacidiphilum infernorum (isolate V4) (Methylokorus infernorum (strain V4)) protein is 4-diphosphocytidyl-2-C-methyl-D-erythritol kinase.